A 113-amino-acid polypeptide reads, in one-letter code: Iron-sulfur cluster insertion protein ErpA (113 aa).

Iron-sulfur cluster contacts are provided by Cys41, Cys105, and Cys107.

It belongs to the HesB/IscA family. As to quaternary structure, homodimer. Iron-sulfur cluster is required as a cofactor.

In terms of biological role, required for insertion of 4Fe-4S clusters for at least IspG. The chain is Iron-sulfur cluster insertion protein ErpA from Vibrio parahaemolyticus serotype O3:K6 (strain RIMD 2210633).